Here is a 422-residue protein sequence, read N- to C-terminus: UDP-N-acetylglucosamine 1-carboxyvinyltransferase (422 aa).

22–23 (KN) contacts phosphoenolpyruvate. R93 serves as a coordination point for UDP-N-acetyl-alpha-D-glucosamine. The active-site Proton donor is C117. Residue C117 is modified to 2-(S-cysteinyl)pyruvic acid O-phosphothioketal. UDP-N-acetyl-alpha-D-glucosamine contacts are provided by residues 122–126 (RPVDQ), D309, and I331.

It belongs to the EPSP synthase family. MurA subfamily.

It localises to the cytoplasm. It carries out the reaction phosphoenolpyruvate + UDP-N-acetyl-alpha-D-glucosamine = UDP-N-acetyl-3-O-(1-carboxyvinyl)-alpha-D-glucosamine + phosphate. The protein operates within cell wall biogenesis; peptidoglycan biosynthesis. In terms of biological role, cell wall formation. Adds enolpyruvyl to UDP-N-acetylglucosamine. This chain is UDP-N-acetylglucosamine 1-carboxyvinyltransferase, found in Delftia acidovorans (strain DSM 14801 / SPH-1).